The following is a 330-amino-acid chain: D-lactate dehydrogenase (330 aa).

NAD(+) contacts are provided by residues 156–157 (RI), Asp-176, 206–207 (VP), 233–235 (AAR), and Asp-259. Arg-235 is an active-site residue. Residue Glu-264 is part of the active site. His-296 (proton donor) is an active-site residue.

It belongs to the D-isomer specific 2-hydroxyacid dehydrogenase family.

The enzyme catalyses (R)-lactate + NAD(+) = pyruvate + NADH + H(+). The chain is D-lactate dehydrogenase (ldhD) from Staphylococcus aureus (strain Mu50 / ATCC 700699).